The sequence spans 204 residues: MAVVIKFFRWIWQKISRWVFFWKHKAKSVIMDHTDSKKNELKAEKAFKVSETFKLVEPPKEAKVSKMDVSPKVVDPCLLAKTTMDGAAVEAGRRRRSLLKLPQAAVKSVSMLMASALQSGWQMCSWKSSVSSTSVASQMKTRSPLESREAAMLREVYLVLWAIRKQLRQVARRQERRRRHHLRAHMGPQPDPAQGLKQDARSPL.

S65 bears the Phosphoserine mark. A compositionally biased stretch (basic residues) spans 172–184; it reads RRQERRRRHHLRA. Residues 172–204 form a disordered region; the sequence is RRQERRRRHHLRAHMGPQPDPAQGLKQDARSPL.

The protein resides in the cytoplasmic vesicle. It localises to the secretory vesicle. The protein localises to the acrosome. In terms of biological role, may play an important role in acrosome formation and nucleus shaping during spermiogenesis. The polypeptide is Sperm acrosome developmental regulator (SPACDR) (Bos taurus (Bovine)).